A 255-amino-acid chain; its full sequence is uncharacterized protein (255 aa).

It belongs to the methyltransferase superfamily.

This is an uncharacterized protein from Mycobacterium ulcerans (strain Agy99).